We begin with the raw amino-acid sequence, 288 residues long: Fe-S cluster assembly protein dre2 (288 aa).

Positions 1–127 (MSSSVLVLTS…LSRPNQVEAV (127 aa)) are N-terminal SAM-like domain. Residues 128 to 177 (PIKLSNKNGQSASKNKILDFLKSDKENLISGDDDQELIDEDELLDESAHD) form a linker region. Residues Cys185, Cys196, Cys199, and Cys201 each coordinate [2Fe-2S] cluster. The tract at residues 185 to 201 (CKPEPGKKKRACKNCTC) is fe-S binding site A. [4Fe-4S] cluster is bound by residues Cys244, Cys247, Cys255, and Cys258. 2 consecutive short sequence motifs (cx2C motif) follow at residues 244–247 (CGNC) and 255–258 (CSGC). The fe-S binding site B stretch occupies residues 244–258 (CGNCYLGDAFRCSGC).

The protein belongs to the anamorsin family. Monomer. Interacts with tah18. Interacts with tim40. [2Fe-2S] cluster serves as cofactor. [4Fe-4S] cluster is required as a cofactor.

It is found in the cytoplasm. The protein localises to the mitochondrion intermembrane space. In terms of biological role, component of the cytosolic iron-sulfur (Fe-S) protein assembly (CIA) machinery required for the maturation of extramitochondrial Fe-S proteins. Part of an electron transfer chain functioning in an early step of cytosolic Fe-S biogenesis, facilitating the de novo assembly of a [4Fe-4S] cluster on the scaffold complex cfd1-nbp35. Electrons are transferred to dre2 from NADPH via the FAD- and FMN-containing protein tah18. Tah18-dre2 are also required for the assembly of the diferric tyrosyl radical cofactor of ribonucleotide reductase (RNR), probably by providing electrons for reduction during radical cofactor maturation in the catalytic small subunit suc22. This is Fe-S cluster assembly protein dre2 from Schizosaccharomyces pombe (strain 972 / ATCC 24843) (Fission yeast).